The sequence spans 229 residues: Flagellar L-ring protein (229 aa).

A signal peptide spans 1-25; that stretch reads MKQVRLLPSAPVRAVCALAVAALAG. A lipid anchor (N-palmitoyl cysteine) is attached at Cys-26. The S-diacylglycerol cysteine moiety is linked to residue Cys-26.

The protein belongs to the FlgH family. In terms of assembly, the basal body constitutes a major portion of the flagellar organelle and consists of four rings (L,P,S, and M) mounted on a central rod.

It localises to the cell outer membrane. The protein localises to the bacterial flagellum basal body. In terms of biological role, assembles around the rod to form the L-ring and probably protects the motor/basal body from shearing forces during rotation. The protein is Flagellar L-ring protein of Burkholderia ambifaria (strain MC40-6).